Reading from the N-terminus, the 359-residue chain is Probable isoaspartyl peptidase/L-asparaginase 3 (359 aa).

Thr224 (nucleophile) is an active-site residue. Residues 252 to 255 (RVGD) and 275 to 278 (TGDG) contribute to the substrate site.

The protein belongs to the Ntn-hydrolase family. In terms of assembly, heterotetramer of two alpha and two beta chains arranged as a dimer of alpha/beta heterodimers. Post-translationally, cleaved into an alpha and beta chain by autocatalysis; this activates the enzyme. The N-terminal residue of the beta subunit is responsible for the nucleophile hydrolase activity.

It carries out the reaction Cleavage of a beta-linked Asp residue from the N-terminus of a polypeptide.. Its function is as follows. Acts in asparagine catabolism but also in the final steps of protein degradation via hydrolysis of a range of isoaspartyl dipeptides. The sequence is that of Probable isoaspartyl peptidase/L-asparaginase 3 from Arabidopsis thaliana (Mouse-ear cress).